The primary structure comprises 205 residues: Peptidyl-tRNA hydrolase (205 aa).

Y14 provides a ligand contact to tRNA. The active-site Proton acceptor is H19. TRNA-binding residues include Y64, N66, and N112.

This sequence belongs to the PTH family. As to quaternary structure, monomer.

It localises to the cytoplasm. It carries out the reaction an N-acyl-L-alpha-aminoacyl-tRNA + H2O = an N-acyl-L-amino acid + a tRNA + H(+). Hydrolyzes ribosome-free peptidyl-tRNAs (with 1 or more amino acids incorporated), which drop off the ribosome during protein synthesis, or as a result of ribosome stalling. Its function is as follows. Catalyzes the release of premature peptidyl moieties from peptidyl-tRNA molecules trapped in stalled 50S ribosomal subunits, and thus maintains levels of free tRNAs and 50S ribosomes. The protein is Peptidyl-tRNA hydrolase of Parvibaculum lavamentivorans (strain DS-1 / DSM 13023 / NCIMB 13966).